The following is a 291-amino-acid chain: Taste receptor type 2 member 16 (291 aa).

A topological domain (extracellular) is located at residue methionine 1. The helical transmembrane segment at 2 to 22 threads the bilayer; sequence IPIQLTVFFMIIYVLESLTII. Residues 23 to 41 are Cytoplasmic-facing; that stretch reads VQSSLIVAVLGREWLQVRR. Residues 42–62 form a helical membrane-spanning segment; the sequence is LMPVDMILISLGISRFCLQWA. Topologically, residues 63-84 are extracellular; the sequence is SMLNBFCSYFNLNYVLCNLTIT. N-linked (GlcNAc...) asparagine glycosylation occurs at asparagine 80. Residues 85-105 form a helical membrane-spanning segment; that stretch reads WEFFNILTFWLNSLLTVFYCI. At 106–125 the chain is on the cytoplasmic side; it reads KVSSFTHHIFLWLRWRILRL. A helical transmembrane segment spans residues 126–146; the sequence is FPWILLGSLMITCVTIIPSAI. The Extracellular segment spans residues 147 to 182; that stretch reads GNYIQIQLLTMEHLPRNSTVTDKLEKFHQYEFQAHT. Asparagine 163 carries an N-linked (GlcNAc...) asparagine glycan. The chain crosses the membrane as a helical span at residues 183-203; sequence VALVIPFILFLASTILLMASL. The Cytoplasmic portion of the chain corresponds to 204-228; that stretch reads TKQIQHHSTGHCNPSMKAHFTALRS. Residues 229–249 traverse the membrane as a helical segment; that stretch reads LAVLFIVFTSYFLTILITIIG. The Extracellular portion of the chain corresponds to 250 to 257; sequence TLFDRRCW. Residues 258 to 278 traverse the membrane as a helical segment; that stretch reads LWVWEAFVYAFILMHSTSLML. The Cytoplasmic portion of the chain corresponds to 279 to 291; that stretch reads SSPTLKRILKGKC.

The protein belongs to the G-protein coupled receptor T2R family. Interacts with RTP3 and RTP4.

Its subcellular location is the cell membrane. Receptor that may play a role in the perception of bitterness and is gustducin-linked. May play a role in sensing the chemical composition of the gastrointestinal content. The activity of this receptor may stimulate alpha gustducin, mediate PLC-beta-2 activation and lead to the gating of TRPM5. This Gorilla gorilla gorilla (Western lowland gorilla) protein is Taste receptor type 2 member 16 (TAS2R16).